We begin with the raw amino-acid sequence, 134 residues long: D-xylulose reductase (134 aa).

A disordered region spans residues 31–115; it reads PATTTXYKXQ…XXQXDKIGRY (85 aa). The segment covering 50–59 has biased composition (basic and acidic residues); that stretch reads QTHEGTHQDV.

The protein belongs to the zinc-containing alcohol dehydrogenase family.

The catalysed reaction is xylitol + NAD(+) = D-xylulose + NADH + H(+). Activated by calcium and inhibited by zinc. The polypeptide is D-xylulose reductase (Sus scrofa (Pig)).